The sequence spans 175 residues: 19.0 kDa class II heat shock protein (175 aa).

The sHSP domain occupies 42-165; the sequence is DRRAMANTPM…KPRVVEVKVA (124 aa). The disordered stretch occupies residues 145-175; it reads TVDKKPPPEPKKPRVVEVKVAGAGEPKGKGK. The span at 146-161 shows a compositional bias: basic and acidic residues; sequence VDKKPPPEPKKPRVVE.

The protein belongs to the small heat shock protein (HSP20) family. As to quaternary structure, may form oligomeric structures.

It localises to the cytoplasm. In Oryza sativa subsp. japonica (Rice), this protein is 19.0 kDa class II heat shock protein (HSP19.0).